A 283-amino-acid polypeptide reads, in one-letter code: MASYPYGQGYHGAAGQPPGAPQTNYYGGQQYGGGVQPAASYGRPAPGAPYGSPPSGGVYGHPVPGSAAPGAPGGPYGGQAPGGPYSVPGSTPYGSQQHGSYGQGAPAGNIPPGVDPEAFSWFQTVDTDHSGYISLKELKQALVNTNWSSFNDETCTMMMNMFDKSNSGRIDMFGFSALWRFIQQWRNLFQQYDRDRSGSINQGELHQALCQMGYQLSPQFVQIVMSRYAQRSAQPGLQLDRFIQICTQLQSMTEAFREKDTGQIGTAKLSYEDFITMTTTRLL.

Repeat copies occupy residues Pro21 to Gln30, Gln36 to Pro44, Ala45 to Pro54, Ser55 to Pro62, Ala71 to Gln79, Ala80 to Val87, Pro88 to Ser95, and Gln96 to Gly104. The segment at Pro21 to Gly104 is 8 X 9 AA approximate tandem repeat of [AP]-P-G-G-P-Y-G-G-P-P. Positions Pro37 to Gly70 are enriched in low complexity. The interval Pro37–Gly113 is disordered. Residues Ala71–Pro81 show a composition bias toward gly residues. Residues Tyr93–Gly104 are compositionally biased toward low complexity. 5 EF-hand domains span residues Gly113 to Ser148, Thr154 to Trp179, Arg180 to Gln215, Leu216 to Met252, and Thr253 to Leu282. Asp126, Asp128, Ser130, Tyr132, and Glu137 together coordinate Ca(2+). Ca(2+) is bound by residues Asp193, Asp195, Ser197, Ser199, and Glu204.

In terms of assembly, heterodimer; heterodimerizes (via the EF-hand 5) with pdcd6.

Its subcellular location is the cytoplasm. The protein localises to the endoplasmic reticulum. It localises to the membrane. It is found in the cytoplasmic vesicle. The protein resides in the COPII-coated vesicle membrane. In terms of biological role, calcium-binding protein that acts as an adapter that bridges unrelated proteins or stabilizes weak protein-protein complexes in response to calcium. Acts as a negative regulator of ER-Golgi transport. This is Peflin from Xenopus laevis (African clawed frog).